The following is a 398-amino-acid chain: Trans-2-enoyl-CoA reductase [NADH] (398 aa).

Residues 47–52 (GASSGF), 74–75 (FE), 111–112 (DA), and 139–140 (LA) contribute to the NAD(+) site. Substrate is bound at residue Y225. Catalysis depends on Y235, which acts as the Proton donor. NAD(+)-binding positions include K244 and 274-276 (IVT).

Belongs to the TER reductase family. Monomer.

The catalysed reaction is a 2,3-saturated acyl-CoA + NAD(+) = a (2E)-enoyl-CoA + NADH + H(+). The protein operates within lipid metabolism; fatty acid biosynthesis. Involved in the fatty acid synthesis (FAS II). Catalyzes the reduction of a carbon-carbon double bond in an enoyl moiety that is covalently linked to a coenzyme A (CoA). The protein is Trans-2-enoyl-CoA reductase [NADH] of Clostridium beijerinckii (strain ATCC 51743 / NCIMB 8052) (Clostridium acetobutylicum).